The primary structure comprises 449 residues: UDP-N-acetylmuramoylalanine--D-glutamate ligase (449 aa).

107–113 (GSNGKST) serves as a coordination point for ATP.

The protein belongs to the MurCDEF family.

It localises to the cytoplasm. It catalyses the reaction UDP-N-acetyl-alpha-D-muramoyl-L-alanine + D-glutamate + ATP = UDP-N-acetyl-alpha-D-muramoyl-L-alanyl-D-glutamate + ADP + phosphate + H(+). It participates in cell wall biogenesis; peptidoglycan biosynthesis. In terms of biological role, cell wall formation. Catalyzes the addition of glutamate to the nucleotide precursor UDP-N-acetylmuramoyl-L-alanine (UMA). This is UDP-N-acetylmuramoylalanine--D-glutamate ligase from Hydrogenovibrio crunogenus (strain DSM 25203 / XCL-2) (Thiomicrospira crunogena).